We begin with the raw amino-acid sequence, 212 residues long: Adenylate kinase (212 aa).

Position 10 to 15 (glycine 10 to threonine 15) interacts with ATP. The tract at residues serine 30–valine 59 is NMP. AMP contacts are provided by residues threonine 31, arginine 36, glutamate 57 to valine 59, glycine 86 to arginine 89, and glutamine 93. The LID stretch occupies residues glycine 127 to aspartate 159. ATP-binding positions include arginine 128 and threonine 137–phenylalanine 138. 2 residues coordinate AMP: arginine 156 and arginine 167. Glutamine 195 contributes to the ATP binding site.

Monomer.

Its subcellular location is the cytoplasm. It carries out the reaction AMP + ATP = 2 ADP. It participates in purine metabolism; AMP biosynthesis via salvage pathway; AMP from ADP: step 1/1. Its function is as follows. Catalyzes the reversible transfer of the terminal phosphate group between ATP and AMP. Plays an important role in cellular energy homeostasis and in adenine nucleotide metabolism. This chain is Adenylate kinase, found in Streptococcus pyogenes serotype M6 (strain ATCC BAA-946 / MGAS10394).